We begin with the raw amino-acid sequence, 328 residues long: uncharacterized protein (328 aa).

The region spanning 37–179 (LTERLLCHQG…AMTVLRCRKI (143 aa)) is the SIS domain. 52 to 57 (GIGKSG) is an ATP binding site. 2 consecutive CBS domains span residues 205-264 (LSPR…GGAI) and 273-328 (MTRK…AGLL).

Belongs to the SIS family. GutQ/KpsF subfamily.

This is an uncharacterized protein from Chlamydia muridarum (strain MoPn / Nigg).